Here is a 120-residue protein sequence, read N- to C-terminus: Glycine cleavage system H protein (120 aa).

In terms of domain architecture, Lipoyl-binding spans 17-99 (VATVGITAHA…QGGGWLYRLK (83 aa)). N6-lipoyllysine is present on Lys-58.

It belongs to the GcvH family. In terms of assembly, the glycine cleavage system is composed of four proteins: P, T, L and H. (R)-lipoate is required as a cofactor.

In terms of biological role, the glycine cleavage system catalyzes the degradation of glycine. The H protein shuttles the methylamine group of glycine from the P protein to the T protein. The chain is Glycine cleavage system H protein from Methylorubrum extorquens (strain CM4 / NCIMB 13688) (Methylobacterium extorquens).